The primary structure comprises 157 residues: Ribosome maturation factor RimP (157 aa).

This sequence belongs to the RimP family.

The protein localises to the cytoplasm. Required for maturation of 30S ribosomal subunits. The chain is Ribosome maturation factor RimP from Streptococcus thermophilus (strain ATCC BAA-491 / LMD-9).